The primary structure comprises 105 residues: NADH-quinone oxidoreductase subunit K (105 aa).

3 consecutive transmembrane segments (helical) span residues 7 to 27, 34 to 54, and 66 to 86; these read IGVN…MFAV, IVIL…FLTF, and FSLF…AIVI.

The protein belongs to the complex I subunit 4L family. NDH-1 is composed of 14 different subunits. Subunits NuoA, H, J, K, L, M, N constitute the membrane sector of the complex.

Its subcellular location is the cell inner membrane. The catalysed reaction is a quinone + NADH + 5 H(+)(in) = a quinol + NAD(+) + 4 H(+)(out). Its function is as follows. NDH-1 shuttles electrons from NADH, via FMN and iron-sulfur (Fe-S) centers, to quinones in the respiratory chain. The immediate electron acceptor for the enzyme in this species is believed to be a menaquinone. Couples the redox reaction to proton translocation (for every two electrons transferred, four hydrogen ions are translocated across the cytoplasmic membrane), and thus conserves the redox energy in a proton gradient. This Chlorobaculum parvum (strain DSM 263 / NCIMB 8327) (Chlorobium vibrioforme subsp. thiosulfatophilum) protein is NADH-quinone oxidoreductase subunit K.